The sequence spans 380 residues: Alcohol dehydrogenase 2 (380 aa).

8 residues coordinate Zn(2+): Cys-48, Thr-50, His-70, Cys-100, Cys-103, Cys-106, Cys-114, and Cys-178. An alcohol contacts are provided by Thr-50 and His-70. An NAD(+)-binding site is contributed by Thr-50. NAD(+) is bound by residues 203 to 208 (GLGAVG), Asp-227, Arg-232, Thr-273, Val-296, 296 to 298 (VGV), Phe-323, and Arg-373.

The protein belongs to the zinc-containing alcohol dehydrogenase family. As to quaternary structure, homodimer. Homotetramer. It depends on Zn(2+) as a cofactor.

Its subcellular location is the cytoplasm. The catalysed reaction is a primary alcohol + NAD(+) = an aldehyde + NADH + H(+). It carries out the reaction a secondary alcohol + NAD(+) = a ketone + NADH + H(+). The polypeptide is Alcohol dehydrogenase 2 (ADH2) (Solanum tuberosum (Potato)).